We begin with the raw amino-acid sequence, 302 residues long: ATP synthase gamma chain (302 aa).

Belongs to the ATPase gamma chain family. In terms of assembly, F-type ATPases have 2 components, CF(1) - the catalytic core - and CF(0) - the membrane proton channel. CF(1) has five subunits: alpha(3), beta(3), gamma(1), delta(1), epsilon(1). CF(0) has three main subunits: a, b and c.

Its subcellular location is the cell membrane. Functionally, produces ATP from ADP in the presence of a proton gradient across the membrane. The gamma chain is believed to be important in regulating ATPase activity and the flow of protons through the CF(0) complex. In Kineococcus radiotolerans (strain ATCC BAA-149 / DSM 14245 / SRS30216), this protein is ATP synthase gamma chain.